The chain runs to 431 residues: Histidine--tRNA ligase (431 aa).

Belongs to the class-II aminoacyl-tRNA synthetase family. Homodimer.

The protein resides in the cytoplasm. It catalyses the reaction tRNA(His) + L-histidine + ATP = L-histidyl-tRNA(His) + AMP + diphosphate + H(+). The polypeptide is Histidine--tRNA ligase (hisS) (Leifsonia xyli subsp. xyli (strain CTCB07)).